Consider the following 72-residue polypeptide: MVSKKQKLSPISLNQNIDYKDIDLLTLFVTEQGKILPRRATGVTVQQQRRLAKAIKRARVLSLFPFVASNSI.

This sequence belongs to the bacterial ribosomal protein bS18 family. Part of the 30S ribosomal subunit.

Its subcellular location is the plastid. The protein resides in the chloroplast. The sequence is that of Small ribosomal subunit protein bS18c from Phaeodactylum tricornutum (strain CCAP 1055/1).